A 1249-amino-acid polypeptide reads, in one-letter code: Apoptotic protease-activating factor 1 (1249 aa).

The CARD domain maps to 1–90 (MDAKARNCLL…KDLAGLLHSG (90 aa)). The NB-ARC domain maps to 106–415 (NTSFVRTVLC…LETEEVEDIL (310 aa)). ATP-binding positions include 154-161 (GMAGCGKS) and Arg265. The stretch at 613-652 (PHTDAVYHACFSQDGQRIASCGADKTLQVFKAETGEKLLD) is one WD 1-1 repeat. One copy of the WD 1-2 repeat lies at 655–694 (AHEDEVLCCAFSSDDSYIATCSVDKKVKIWDSGTGKLVHT). A WD 1-3 repeat occupies 697–738 (EHSEQVNCCHFTNKSNHLLLATGSNDSFLKLWDLNQKECRNT). The stretch at 741-780 (GHTNSVTHCRFSPDDELLASCSADGTLKLWDVRSANEKKS) is one WD 1-4 repeat. Residues 796 to 837 (DVEVIVKCCSWSADGDRIIVAAKNKVLLLDIHTSGLLTEIHT) form a WD 1-5 repeat. Residues 838–877 (GHHSTIQYCDFSPYDHLAVIALSQYCVELWNIDSRVKVAD) form a WD 1-6 repeat. A WD 1-7 repeat occupies 880–910 (GHLSWVHGVMFSPDGSSFLTASDDQTIRVWE). The interval 910 to 921 (ETRKVCKNSAIV) is interpropeller linker. The stretch at 922-958 (LKQEIDVVFQENEMMVLAVDNIRGLQLIAGKTGQIDY) is one WD 2-1 repeat. One copy of the WD 2-2 repeat lies at 959-998 (LPEAQVSCCCLSPHLEYVAFGDEEGAIKIIELPNNRVFSS). Residues 1001–1040 (GHKKAVRHIQFTADGKTLISSSEDSVIQVWNWQTEEYVFL) form a WD 2-3 repeat. One copy of the WD 2-4 repeat lies at 1042-1080 (AHQETVKDFRLLRDSRLLSWSFDGTVKVWNVITGRIERD). The stretch at 1083 to 1122 (CHQGTVLSCAISSDATKFSSTSADKTAKIWSFELPSPLHE) is one WD 2-5 repeat. The WD 2-6 repeat unit spans residues 1125-1164 (GHNSCVRCSAFSLDGILLATGDDNGEIRIWNVSDGQLLHL). Residues 1176–1213 (THGGWVTDVCFSPDRKMLVSAGGYLKWWNVVTGESSQT) form a WD 2-7 repeat. Residues 1214 to 1249 (FYTNGTNLKKIHVSPDFRTYVTVDNLGILYILQVLE) form a WD 2-8 repeat.

In terms of assembly, monomer. Oligomerizes to a heptameric ring, known as the apoptosome, upon binding of cytochrome c and dATP. Oligomeric Apaf-1 and pro-caspase-9 bind to each other via their respective NH2-terminal CARD domains. Interacts with UACA. Interacts with APIP. Interacts (via CARD and NACHT domains) with NAIP/BIRC1 (via NACHT domain). Interacts with CIAO2A.

It localises to the cytoplasm. Functionally, regulates programmed cell death; necessary for normal brain development. Participates with pro-caspase-9 (Apaf-3) in the cytochrome c-dependent activation of caspase-3, leading to apoptosis. This activation requires ATP. This chain is Apoptotic protease-activating factor 1 (Apaf1), found in Rattus norvegicus (Rat).